Consider the following 861-residue polypeptide: Actin-binding LIM protein 1 (861 aa).

4 LIM zinc-binding domains span residues 97–156 (IHCH…MYGT), 156–216 (TRCH…MSSS), 224–283 (SNCA…LFGV), and 283–343 (VKCE…TKTE). Ser216 bears the Phosphoserine mark. The tract at residues 374-414 (LQLLSPPCLTNSNKNPRQPTRTSSESIYSRPGSSIPGSPGH) is disordered. Over residues 381 to 400 (CLTNSNKNPRQPTRTSSESI) the composition is skewed to polar residues. A compositionally biased stretch (low complexity) spans 404–413 (PGSSIPGSPG). At Ser411 the chain carries Phosphoserine. Tyr417 and Tyr440 each carry phosphotyrosine. Disordered stretches follow at residues 459 to 590 (EDKQ…PTYA) and 634 to 682 (FPAA…ELLR). Ser466, Ser470, and Ser475 each carry phosphoserine. Over residues 467-478 (LGESPRTLSPTP) the composition is skewed to polar residues. Thr477 carries the phosphothreonine modification. The residue at position 479 (Ser479) is a Phosphoserine. A Phosphotyrosine modification is found at Tyr483. The segment covering 493–518 (RSTSQGSINSPVYSRHSYTPTTSRSP) has biased composition (polar residues). 3 positions are modified to phosphoserine: Ser496, Ser499, and Ser502. Low complexity predominate over residues 536–546 (PLRTSSFSSTH). Phosphoserine occurs at positions 582 and 671. Residues 673–723 (REEDEEELLRRRQLQEEQLMKLNSGLGQLILKEEMEKESRERASLASRYDS) adopt a coiled-coil conformation. Lys704 participates in a covalent cross-link: Glycyl lysine isopeptide (Lys-Gly) (interchain with G-Cter in SUMO2). Residues 713 to 748 (ERASLASRYDSPLHSASHAPSSKTSSLPGYGKNGLH) are disordered. 4 positions are modified to phosphoserine: Ser723, Ser738, Ser760, and Ser789. A compositionally biased stretch (low complexity) spans 724–738 (PLHSASHAPSSKTSS). Residues 793–861 (MLEPKIFPYE…NDMKKKAKLF (69 aa)) enclose the HP domain.

In terms of assembly, binds F-actin. Interacts with ABRA. Isoform 1 is detected in adult retina, where it is highly expressed in the ganglion layer. Detected in rod inner segment. Isoform 2 is highly expressed in adult retina, brain, kidney and heart. Isoform 3 is highly expressed in adult retina, brain, kidney, liver, skeletal muscle, spleen and heart. Detected in embryonic retina, brain, spinal cord, peripheral sensory ganglia and thymus.

The protein localises to the cytoplasm. The protein resides in the cytoskeleton. Its function is as follows. May act as scaffold protein. May play a role in the development of the retina. Has been suggested to play a role in axon guidance. This is Actin-binding LIM protein 1 (Ablim1) from Mus musculus (Mouse).